Consider the following 275-residue polypeptide: NH(3)-dependent NAD(+) synthetase (275 aa).

Position 47 to 54 (47 to 54) interacts with ATP; the sequence is GMSGGQDS. Position 53 (Asp53) interacts with Mg(2+). Arg141 lines the deamido-NAD(+) pocket. Thr161 contributes to the ATP binding site. Mg(2+) is bound at residue Glu166. Residues Lys174 and Asp181 each contribute to the deamido-NAD(+) site. Residues Lys190 and Thr212 each contribute to the ATP site. 261 to 262 is a deamido-NAD(+) binding site; sequence HK.

It belongs to the NAD synthetase family. Homodimer.

The catalysed reaction is deamido-NAD(+) + NH4(+) + ATP = AMP + diphosphate + NAD(+) + H(+). Its pathway is cofactor biosynthesis; NAD(+) biosynthesis; NAD(+) from deamido-NAD(+) (ammonia route): step 1/1. Catalyzes the ATP-dependent amidation of deamido-NAD to form NAD. Uses ammonia as a nitrogen source. The protein is NH(3)-dependent NAD(+) synthetase of Oceanobacillus iheyensis (strain DSM 14371 / CIP 107618 / JCM 11309 / KCTC 3954 / HTE831).